We begin with the raw amino-acid sequence, 389 residues long: 26S proteasome non-ATPase regulatory subunit 6 (389 aa).

Residues 193-361 form the PCI domain; that stretch reads DFKQAAELFL…EVVETNRPDS (169 aa).

This sequence belongs to the proteasome subunit S10 family. In terms of assembly, component of the 19S proteasome regulatory particle complex. The 26S proteasome consists of a 20S core particle (CP) and two 19S regulatory subunits (RP). The regulatory particle is made of a lid composed of 9 subunits including PSMD6, a base containing 6 ATPases and few additional components.

Component of the 26S proteasome, a multiprotein complex involved in the ATP-dependent degradation of ubiquitinated proteins. This complex plays a key role in the maintenance of protein homeostasis by removing misfolded or damaged proteins, which could impair cellular functions, and by removing proteins whose functions are no longer required. Therefore, the proteasome participates in numerous cellular processes, including cell cycle progression, apoptosis, or DNA damage repair. The polypeptide is 26S proteasome non-ATPase regulatory subunit 6 (PSMD6) (Bos taurus (Bovine)).